The primary structure comprises 693 residues: F-box protein MAX2 (693 aa).

Positions 3–50 (STTLSDLPDVILSTISSLVSDSRARNSLSLVSHKFLALERSTRSHLTI) constitute an F-box domain. 14 LRR repeats span residues 9–34 (LPDVILSTISSLVSDSRARNSLSLVS), 49–74 (TIRGNARDLSLVPDCFRSISHLDLSF), 75–100 (LSPWGHTLLASLPIDHQNLLALRLKF), 110–135 (VYTRSPSSLELLLPQWPRIRHIKLLR), 141–167 (SQIPTGGDFVPIFEHCGGFLESLDLSN), 168–196 (FYHWTEDLPPVLLRYADVAARLTRLDLLT), 200–225 (TEGYKSSEIVSITKSCPNLKTFRVAC), 232–257 (FEFVGDETLSAVATSSPKLTLLHMVD), 274–299 (DSAVTAGTLIEVFSGLPNLEELVLDV), 302–327 (DVKHSGVALEALNSKCKKLRVLKLGQ), 332–356 (CSATEWRRLDGVALCGGLQSLSIKN), 357–382 (SGDLTDMGLVAIGRGCCKLTTFEIQG), 383–409 (CENVTVDGLRTMVSLRSKTLTDVRISC), and 410–436 (CKNLDTAASLKAIEPICDRIKRLHIDC). Residues 445-465 (EVEGRVETSEADHEEEDDGYE) form a disordered region. LRR repeat units follow at residues 480–505 (CSTSDVNGFCSEDRVWEKLEYLSLWI), 508–532 (GEFLTPLPMTGLDDCPNLEEIRIKI), 541–565 (RPAEPEFGLSCLALYPKLSKMQLDC), and 608–637 (DRDVNQRSLSLPGAGLLQECLTLRKLFIHG).

Part of a SCF (SKP1-cullin-F-box) protein ligase complex. Interacts with SKP1A/ASK1. Interacts with CUL1. Interacts with SMXL6, SMXL7 and SMXL8. Interacts with D14. Forms a complex with D14 and SKP1A/ASK1 in presence of strigolactone. As to expression, expressed in the vasculature of growing leaves and roots, rosette axillary bud, flowers, siliques, funiculi and stems.

It localises to the nucleus. The protein operates within protein modification; protein ubiquitination. Functionally, component of SCF(ASK-cullin-F-box) E3 ubiquitin ligase complexes, which may mediate the ubiquitination and subsequent proteasomal degradation of target proteins. Promotes the senescence. Is necessary for responses to strigolactones and karrikins. Contributes to the selective repression of axillary shoots and moderates the branching by regulating negatively the auxin transport in primary stems, in an AXR1-independent manner. Required for the progression of leaf senescence mediated by methyl jasmonate. Required at each node to suppress axillary bud growth. This chain is F-box protein MAX2, found in Arabidopsis thaliana (Mouse-ear cress).